The chain runs to 130 residues: Transcription antitermination protein NusB (130 aa).

The protein belongs to the NusB family.

Involved in transcription antitermination. Required for transcription of ribosomal RNA (rRNA) genes. Binds specifically to the boxA antiterminator sequence of the ribosomal RNA (rrn) operons. This Bacillus cereus (strain B4264) protein is Transcription antitermination protein NusB.